An 84-amino-acid polypeptide reads, in one-letter code: Turripeptide IX-01 (84 aa).

The N-terminal stretch at 1–21 is a signal peptide; that stretch reads MGFYMLLTVALLLTSFMSVEA. Residues 22–39 constitute a propeptide that is removed on maturation; sequence TPVDQAERSAMKESGLAH. Cystine bridges form between Cys48–Cys70, Cys55–Cys74, and Cys60–Cys81.

In terms of tissue distribution, expressed by the venom duct.

It localises to the secreted. The polypeptide is Turripeptide IX-01 (Gemmula speciosa (Splendid gem-turris)).